A 360-amino-acid polypeptide reads, in one-letter code: Phenylalanine--tRNA ligase alpha subunit (360 aa).

Glu-260 lines the Mg(2+) pocket.

This sequence belongs to the class-II aminoacyl-tRNA synthetase family. Phe-tRNA synthetase alpha subunit type 1 subfamily. Tetramer of two alpha and two beta subunits. Requires Mg(2+) as cofactor.

It is found in the cytoplasm. The catalysed reaction is tRNA(Phe) + L-phenylalanine + ATP = L-phenylalanyl-tRNA(Phe) + AMP + diphosphate + H(+). The sequence is that of Phenylalanine--tRNA ligase alpha subunit from Bartonella tribocorum (strain CIP 105476 / IBS 506).